Reading from the N-terminus, the 349-residue chain is Methylthioribose-1-phosphate isomerase (349 aa).

Residues 49-51, arginine 92, and glutamine 199 each bind substrate; that span reads RGA. The active-site Proton donor is aspartate 240. 250–251 contributes to the substrate binding site; sequence NK.

The protein belongs to the eIF-2B alpha/beta/delta subunits family. MtnA subfamily.

The enzyme catalyses 5-(methylsulfanyl)-alpha-D-ribose 1-phosphate = 5-(methylsulfanyl)-D-ribulose 1-phosphate. Its pathway is amino-acid biosynthesis; L-methionine biosynthesis via salvage pathway; L-methionine from S-methyl-5-thio-alpha-D-ribose 1-phosphate: step 1/6. Functionally, catalyzes the interconversion of methylthioribose-1-phosphate (MTR-1-P) into methylthioribulose-1-phosphate (MTRu-1-P). The sequence is that of Methylthioribose-1-phosphate isomerase from Syntrophobacter fumaroxidans (strain DSM 10017 / MPOB).